A 381-amino-acid chain; its full sequence is tRNA pseudouridine synthase Pus10 (381 aa).

Aspartate 226 serves as the catalytic Nucleophile.

The protein belongs to the pseudouridine synthase Pus10 family.

The enzyme catalyses uridine(54) in tRNA = pseudouridine(54) in tRNA. It catalyses the reaction uridine(55) in tRNA = pseudouridine(55) in tRNA. Responsible for synthesis of pseudouridine from uracil-54 and uracil-55 in the psi GC loop of transfer RNAs. The sequence is that of tRNA pseudouridine synthase Pus10 from Nitrosopumilus maritimus (strain SCM1).